The following is a 504-amino-acid chain: Glycerol kinase (504 aa).

Threonine 16 serves as a coordination point for ADP. Threonine 16 and threonine 17 together coordinate ATP. A sn-glycerol 3-phosphate-binding site is contributed by threonine 16. Arginine 20 provides a ligand contact to ADP. Residues arginine 86, glutamate 87, tyrosine 138, and aspartate 247 each contribute to the sn-glycerol 3-phosphate site. Residues arginine 86, glutamate 87, tyrosine 138, aspartate 247, and glutamine 248 each coordinate glycerol. 2 residues coordinate ADP: threonine 269 and glycine 316. Residues threonine 269, glycine 316, glutamine 320, and glycine 417 each coordinate ATP. ADP is bound by residues glycine 417 and asparagine 421.

Belongs to the FGGY kinase family.

It carries out the reaction glycerol + ATP = sn-glycerol 3-phosphate + ADP + H(+). The protein operates within polyol metabolism; glycerol degradation via glycerol kinase pathway; sn-glycerol 3-phosphate from glycerol: step 1/1. Its activity is regulated as follows. Inhibited by fructose 1,6-bisphosphate (FBP). Key enzyme in the regulation of glycerol uptake and metabolism. Catalyzes the phosphorylation of glycerol to yield sn-glycerol 3-phosphate. The chain is Glycerol kinase from Trichodesmium erythraeum (strain IMS101).